The primary structure comprises 282 residues: RNA-4 uncharacterized 31.9 kDa protein (282 aa).

This chain is RNA-4 uncharacterized 31.9 kDa protein, found in Beta macrocarpa (Beet).